The primary structure comprises 313 residues: Porphobilinogen deaminase (313 aa).

At cysteine 242 the chain carries S-(dipyrrolylmethanemethyl)cysteine.

It belongs to the HMBS family. As to quaternary structure, monomer. Requires dipyrromethane as cofactor.

It carries out the reaction 4 porphobilinogen + H2O = hydroxymethylbilane + 4 NH4(+). It participates in porphyrin-containing compound metabolism; protoporphyrin-IX biosynthesis; coproporphyrinogen-III from 5-aminolevulinate: step 2/4. Tetrapolymerization of the monopyrrole PBG into the hydroxymethylbilane pre-uroporphyrinogen in several discrete steps. The polypeptide is Porphobilinogen deaminase (Klebsiella pneumoniae subsp. pneumoniae (strain ATCC 700721 / MGH 78578)).